A 385-amino-acid polypeptide reads, in one-letter code: 1-deoxy-D-xylulose 5-phosphate reductoisomerase (385 aa).

NADPH is bound by residues Thr10, Gly11, Ser12, Ile13, and Asn124. Lys125 serves as a coordination point for 1-deoxy-D-xylulose 5-phosphate. Glu126 provides a ligand contact to NADPH. Asp150 contributes to the Mn(2+) binding site. Residues Ser151, Glu152, Ser176, and His199 each contribute to the 1-deoxy-D-xylulose 5-phosphate site. Mn(2+) is bound at residue Glu152. Gly205 contacts NADPH. The 1-deoxy-D-xylulose 5-phosphate site is built by Ser212, Asn217, Lys218, and Glu221. Glu221 lines the Mn(2+) pocket.

This sequence belongs to the DXR family. Mg(2+) serves as cofactor. Mn(2+) is required as a cofactor.

The catalysed reaction is 2-C-methyl-D-erythritol 4-phosphate + NADP(+) = 1-deoxy-D-xylulose 5-phosphate + NADPH + H(+). It functions in the pathway isoprenoid biosynthesis; isopentenyl diphosphate biosynthesis via DXP pathway; isopentenyl diphosphate from 1-deoxy-D-xylulose 5-phosphate: step 1/6. Its function is as follows. Catalyzes the NADPH-dependent rearrangement and reduction of 1-deoxy-D-xylulose-5-phosphate (DXP) to 2-C-methyl-D-erythritol 4-phosphate (MEP). This is 1-deoxy-D-xylulose 5-phosphate reductoisomerase from Clostridium botulinum (strain Eklund 17B / Type B).